Consider the following 462-residue polypeptide: Nuclear factor interleukin-3-regulated protein (462 aa).

Lys24 participates in a covalent cross-link: Glycyl lysine isopeptide (Lys-Gly) (interchain with G-Cter in SUMO2). Positions 73–136 (DAMYWEKRRK…GLISSTAYAQ (64 aa)) constitute a bZIP domain. Residues 79 to 95 (KRRKNNEAAKRSREKRR) are basic motif. Residues 99–106 (LVLENKLI) form a leucine-zipper region. Disordered stretches follow at residues 189 to 237 (DVSE…DDRG) and 258 to 302 (SPPL…IHSP). Residues 201-210 (ESSVQGSCRS) show a composition bias toward polar residues. Lys214 is covalently cross-linked (Glycyl lysine isopeptide (Lys-Gly) (interchain with G-Cter in SUMO2)). Residue Lys219 forms a Glycyl lysine isopeptide (Lys-Gly) (interchain with G-Cter in SUMO1); alternate linkage. A Glycyl lysine isopeptide (Lys-Gly) (interchain with G-Cter in SUMO2); alternate cross-link involves residue Lys219. Basic and acidic residues predominate over residues 227–237 (SYTREPRDDRG). Over residues 264–274 (VNRSSSNSPRT) the composition is skewed to polar residues. The tract at residues 299–363 (IHSPVELKHV…PIDMTSKRHF (65 aa)) is necessary for transcriptional repression and sufficient for interaction with DR1. At Ser301 the chain carries Phosphoserine. Glycyl lysine isopeptide (Lys-Gly) (interchain with G-Cter in SUMO2) cross-links involve residues Lys306, Lys314, Lys326, Lys332, Lys337, and Lys350. Ser353 is modified (phosphoserine). Glycyl lysine isopeptide (Lys-Gly) (interchain with G-Cter in SUMO2) cross-links involve residues Lys360, Lys394, Lys401, Lys406, Lys412, Lys419, Lys424, Lys434, and Lys448.

It belongs to the bZIP family. NFIL3 subfamily. Homodimer. Binds DNA as a dimer. Interacts with DR1. Interacts with PER2 and CRY2. Interacts with NR0B2. Interacts with MYSM1. As to expression, expressed in bladder stomach, thyroid, spinal cord, lymph node, trachea, adrenal gland, bone marrow and muscle.

Its subcellular location is the nucleus. Its function is as follows. Acts as a transcriptional regulator that recognizes and binds to the sequence 5'-[GA]TTA[CT]GTAA[CT]-3', a sequence present in many cellular and viral promoters. Represses transcription from promoters with activating transcription factor (ATF) sites. Represses promoter activity in osteoblasts. Represses transcriptional activity of PER1. Represses transcriptional activity of PER2 via the B-site on the promoter. Activates transcription from the interleukin-3 promoter in T-cells. Competes for the same consensus-binding site with PAR DNA-binding factors (DBP, HLF and TEF). Component of the circadian clock that acts as a negative regulator for the circadian expression of PER2 oscillation in the cell-autonomous core clock. Protects pro-B cells from programmed cell death. Represses the transcription of CYP2A5. Positively regulates the expression and activity of CES2 by antagonizing the repressive action of NR1D1 on CES2. Required for the development of natural killer cell precursors. This chain is Nuclear factor interleukin-3-regulated protein (NFIL3), found in Homo sapiens (Human).